The primary structure comprises 83 residues: Small ribosomal subunit protein bS20 (83 aa).

It belongs to the bacterial ribosomal protein bS20 family.

Its function is as follows. Binds directly to 16S ribosomal RNA. This is Small ribosomal subunit protein bS20 from Leuconostoc mesenteroides subsp. mesenteroides (strain ATCC 8293 / DSM 20343 / BCRC 11652 / CCM 1803 / JCM 6124 / NCDO 523 / NBRC 100496 / NCIMB 8023 / NCTC 12954 / NRRL B-1118 / 37Y).